The sequence spans 245 residues: 5'-nucleotidase SurE (245 aa).

A divalent metal cation-binding residues include Asp8, Asp9, Ser39, and Asn91.

It belongs to the SurE nucleotidase family. Requires a divalent metal cation as cofactor.

It localises to the cytoplasm. The enzyme catalyses a ribonucleoside 5'-phosphate + H2O = a ribonucleoside + phosphate. Its function is as follows. Nucleotidase that shows phosphatase activity on nucleoside 5'-monophosphates. This Janthinobacterium sp. (strain Marseille) (Minibacterium massiliensis) protein is 5'-nucleotidase SurE.